Reading from the N-terminus, the 168-residue chain is Lipoprotein signal peptidase (168 aa).

The next 3 helical transmembrane spans lie at 6 to 26 (VLAA…DQIT), 70 to 90 (WFLA…IAKL), and 98 to 118 (ALAL…RMLL). Catalysis depends on residues D123 and D141. Residues 139–159 (IADSAICIGAALLVWDSLFGT) form a helical membrane-spanning segment.

It belongs to the peptidase A8 family.

It is found in the cell inner membrane. The catalysed reaction is Release of signal peptides from bacterial membrane prolipoproteins. Hydrolyzes -Xaa-Yaa-Zaa-|-(S,diacylglyceryl)Cys-, in which Xaa is hydrophobic (preferably Leu), and Yaa (Ala or Ser) and Zaa (Gly or Ala) have small, neutral side chains.. It participates in protein modification; lipoprotein biosynthesis (signal peptide cleavage). This protein specifically catalyzes the removal of signal peptides from prolipoproteins. In Teredinibacter turnerae (strain ATCC 39867 / T7901), this protein is Lipoprotein signal peptidase.